Here is a 1050-residue protein sequence, read N- to C-terminus: Probable beta-glucosidase E (1050 aa).

A disordered region spans residues 1 to 87; that stretch reads MPPPDSNPGS…RSSSTNGGHN (87 aa). Residues 1-174 lie on the Cytoplasmic side of the membrane; it reads MPPPDSNPGS…VKYARIWRRT (174 aa). Residues 11–20 show a composition bias toward basic and acidic residues; that stretch reads FRDHLKHDNK. Over residues 47–56 the composition is skewed to low complexity; it reads SPRSASASSS. Residues 78-87 show a composition bias toward polar residues; that stretch reads RSSSTNGGHN. A helical; Signal-anchor for type II membrane protein membrane pass occupies residues 175–195; it reads LVVVIVALALLVWGFLRFTAA. Residues 196-1050 lie on the Extracellular side of the membrane; that stretch reads QRQGPKVWPM…SRDLPLQAKY (855 aa). 4 N-linked (GlcNAc...) asparagine glycosylation sites follow: asparagine 236, asparagine 244, asparagine 300, and asparagine 430. Aspartate 458 is an active-site residue. Asparagine 501, asparagine 540, asparagine 605, asparagine 884, asparagine 920, asparagine 929, and asparagine 993 each carry an N-linked (GlcNAc...) asparagine glycan.

It belongs to the glycosyl hydrolase 3 family.

Its subcellular location is the cell membrane. The enzyme catalyses Hydrolysis of terminal, non-reducing beta-D-glucosyl residues with release of beta-D-glucose.. The protein operates within glycan metabolism; cellulose degradation. Beta-glucosidases are one of a number of cellulolytic enzymes involved in the degradation of cellulosic biomass. Catalyzes the last step releasing glucose from the inhibitory cellobiose. In Aspergillus clavatus (strain ATCC 1007 / CBS 513.65 / DSM 816 / NCTC 3887 / NRRL 1 / QM 1276 / 107), this protein is Probable beta-glucosidase E (bglE).